The sequence spans 468 residues: 3-isopropylmalate dehydratase large subunit (468 aa).

The [4Fe-4S] cluster site is built by cysteine 347, cysteine 407, and cysteine 410.

It belongs to the aconitase/IPM isomerase family. LeuC type 1 subfamily. In terms of assembly, heterodimer of LeuC and LeuD. It depends on [4Fe-4S] cluster as a cofactor.

It catalyses the reaction (2R,3S)-3-isopropylmalate = (2S)-2-isopropylmalate. It participates in amino-acid biosynthesis; L-leucine biosynthesis; L-leucine from 3-methyl-2-oxobutanoate: step 2/4. In terms of biological role, catalyzes the isomerization between 2-isopropylmalate and 3-isopropylmalate, via the formation of 2-isopropylmaleate. This Synechocystis sp. (strain ATCC 27184 / PCC 6803 / Kazusa) protein is 3-isopropylmalate dehydratase large subunit.